Consider the following 211-residue polypeptide: Peptide methionine sulfoxide reductase MsrA (211 aa).

Residue cysteine 52 is part of the active site.

It belongs to the MsrA Met sulfoxide reductase family.

It carries out the reaction L-methionyl-[protein] + [thioredoxin]-disulfide + H2O = L-methionyl-(S)-S-oxide-[protein] + [thioredoxin]-dithiol. It catalyses the reaction [thioredoxin]-disulfide + L-methionine + H2O = L-methionine (S)-S-oxide + [thioredoxin]-dithiol. Has an important function as a repair enzyme for proteins that have been inactivated by oxidation. Catalyzes the reversible oxidation-reduction of methionine sulfoxide in proteins to methionine. This is Peptide methionine sulfoxide reductase MsrA from Photobacterium profundum (strain SS9).